The primary structure comprises 548 residues: Membrane protein insertase YidC (548 aa).

The helical transmembrane segment at 6–26 threads the bilayer; the sequence is NLLVIALLFVSFMIWQAWEQD. The segment at 28-55 is disordered; the sequence is NPQPQAQQTTQTTTTAAGSAADQGVPAS. Residues 30–50 are compositionally biased toward low complexity; it reads QPQAQQTTQTTTTAAGSAADQ. Transmembrane regions (helical) follow at residues 350–370, 420–440, 458–478, and 499–519; these read FVGNWGFSIIIITFIVRGIMY, LGGCFPLLIQMPIFLALYYML, LSAQDPYYILPILMGVTMFFI, and PVIFTVFFLWFPSGLVLYYIV.

Belongs to the OXA1/ALB3/YidC family. Type 1 subfamily. As to quaternary structure, interacts with the Sec translocase complex via SecD. Specifically interacts with transmembrane segments of nascent integral membrane proteins during membrane integration.

It localises to the cell inner membrane. Functionally, required for the insertion and/or proper folding and/or complex formation of integral membrane proteins into the membrane. Involved in integration of membrane proteins that insert both dependently and independently of the Sec translocase complex, as well as at least some lipoproteins. Aids folding of multispanning membrane proteins. This Shigella flexneri protein is Membrane protein insertase YidC.